The primary structure comprises 331 residues: 2-hydroxyacid dehydrogenase homolog (331 aa).

Residues 154–155, 234–236, and Asp-260 each bind NAD(+); these read HI and TSR. The active site involves Arg-236. Glu-265 is an active-site residue. His-297 functions as the Proton donor in the catalytic mechanism. 297–300 serves as a coordination point for NAD(+); that stretch reads HQAF.

The protein belongs to the D-isomer specific 2-hydroxyacid dehydrogenase family.

This chain is 2-hydroxyacid dehydrogenase homolog (ddh), found in Zymomonas mobilis subsp. mobilis (strain ATCC 31821 / ZM4 / CP4).